A 92-amino-acid chain; its full sequence is DNA-directed RNA polymerase subunit omega (92 aa).

The protein belongs to the RNA polymerase subunit omega family. In terms of assembly, the RNAP catalytic core consists of 2 alpha, 1 beta, 1 beta' and 1 omega subunit. When a sigma factor is associated with the core the holoenzyme is formed, which can initiate transcription.

It carries out the reaction RNA(n) + a ribonucleoside 5'-triphosphate = RNA(n+1) + diphosphate. Promotes RNA polymerase assembly. Latches the N- and C-terminal regions of the beta' subunit thereby facilitating its interaction with the beta and alpha subunits. The protein is DNA-directed RNA polymerase subunit omega of Shewanella baltica (strain OS223).